Reading from the N-terminus, the 171-residue chain is MSILQILHFPDDRLRKIASPVKKMDDQIRQIADDMLETMYQAEGIGLAATQVNIHQRIIVIDVSEDRHQPLILINPELLEKSGETGIEEGCLSIPGEKAFIPRAKEITIQALNREGRSFRLSADDLLAICIQHEMDHLIGKLFVDYLSPFKRQRIQKKMEKLQKINEKKDK.

Fe cation is bound by residues Cys91 and His133. Glu134 is an active-site residue. His137 contributes to the Fe cation binding site.

This sequence belongs to the polypeptide deformylase family. Requires Fe(2+) as cofactor.

The enzyme catalyses N-terminal N-formyl-L-methionyl-[peptide] + H2O = N-terminal L-methionyl-[peptide] + formate. Its function is as follows. Removes the formyl group from the N-terminal Met of newly synthesized proteins. Requires at least a dipeptide for an efficient rate of reaction. N-terminal L-methionine is a prerequisite for activity but the enzyme has broad specificity at other positions. The sequence is that of Peptide deformylase from Hamiltonella defensa subsp. Acyrthosiphon pisum (strain 5AT).